The primary structure comprises 101 residues: Small ribosomal subunit protein uS14 (101 aa).

This sequence belongs to the universal ribosomal protein uS14 family. Part of the 30S ribosomal subunit. Contacts proteins S3 and S10.

Binds 16S rRNA, required for the assembly of 30S particles and may also be responsible for determining the conformation of the 16S rRNA at the A site. The sequence is that of Small ribosomal subunit protein uS14 from Neisseria gonorrhoeae (strain ATCC 700825 / FA 1090).